A 400-amino-acid chain; its full sequence is Argininosuccinate synthase (400 aa).

ATP-binding positions include 10-18 (AYSGGVDTS) and Ala-38. Residue Tyr-89 participates in L-citrulline binding. Position 119 (Gly-119) interacts with ATP. L-aspartate is bound by residues Thr-121, Asn-125, and Asp-126. Asn-125 serves as a coordination point for L-citrulline. L-citrulline-binding residues include Arg-129, Ser-177, Ser-186, Glu-262, and Tyr-274.

The protein belongs to the argininosuccinate synthase family. Type 1 subfamily. Homotetramer.

The protein localises to the cytoplasm. It catalyses the reaction L-citrulline + L-aspartate + ATP = 2-(N(omega)-L-arginino)succinate + AMP + diphosphate + H(+). It functions in the pathway amino-acid biosynthesis; L-arginine biosynthesis; L-arginine from L-ornithine and carbamoyl phosphate: step 2/3. In Prochlorococcus marinus (strain NATL1A), this protein is Argininosuccinate synthase.